Consider the following 553-residue polypeptide: Formate--tetrahydrofolate ligase (553 aa).

62–69 lines the ATP pocket; that stretch reads TPAGEGKS.

It belongs to the formate--tetrahydrofolate ligase family.

It carries out the reaction (6S)-5,6,7,8-tetrahydrofolate + formate + ATP = (6R)-10-formyltetrahydrofolate + ADP + phosphate. It participates in one-carbon metabolism; tetrahydrofolate interconversion. The sequence is that of Formate--tetrahydrofolate ligase from Pediococcus pentosaceus (strain ATCC 25745 / CCUG 21536 / LMG 10740 / 183-1w).